The following is a 521-amino-acid chain: Caspase-10 (521 aa).

Residues 1–219 (MKSQGQHWYS…GEEELVSQTD (219 aa)) constitute a propeptide that is removed on maturation. 2 DED domains span residues 19 to 97 (SFRE…HLNC) and 114 to 187 (LFRN…NIEK). 2 stretches are compositionally biased toward polar residues: residues 231–248 (SWQN…TNGA) and 259–268 (ASANTLNSET). The interval 231-269 (SWQNKHAGSNGNRATNGAPSLVSRGMQGASANTLNSETS) is disordered. Catalysis depends on residues H358 and C401.

The protein belongs to the peptidase C14A family. As to quaternary structure, heterotetramer that consists of two anti-parallel arranged heterodimers, each one formed by a 23/17 kDa (p23/17) (depending on the splicing events) and a 12 kDa (p12) subunit. Self-associates. Interacts with FADD and CASP8. Found in a Fas signaling complex consisting of FAS, FADD, CASP8 and CASP10. Interacts with RFFL and RNF34; negatively regulate CASP10 through proteasomal degradation. Interacts with RIOK3. In terms of processing, cleavage by granzyme B and autocatalytic activity generate the two active subunits. In terms of tissue distribution, detectable in most tissues. Lowest expression is seen in brain, kidney, prostate, testis and colon.

The enzyme catalyses Strict requirement for Asp at position P1 and has a preferred cleavage sequence of Leu-Gln-Thr-Asp-|-Gly.. Functionally, involved in the activation cascade of caspases responsible for apoptosis execution. Recruited to both Fas- and TNFR-1 receptors in a FADD dependent manner. May participate in the granzyme B apoptotic pathways. Cleaves and activates effector caspases CASP3, CASP4, CASP6, CASP7, CASP8 and CASP9. Hydrolyzes the small- molecule substrates, Tyr-Val-Ala-Asp-|-AMC and Asp-Glu-Val-Asp-|-AMC. Its function is as follows. Isoform 7 can enhance NF-kappaB activity but promotes only slight apoptosis. Isoform C is proteolytically inactive. This Homo sapiens (Human) protein is Caspase-10 (CASP10).